The chain runs to 415 residues: Protein fuzzy homolog (415 aa).

This sequence belongs to the fuzzy family. As to quaternary structure, component of the CPLANE (ciliogenesis and planar polarity effectors) complex, composed of INTU, FUZ and WDPCP. Interacts with CPLANE1. Interacts with CPLANE2. Expressed in dermal and epidermal cells.

It is found in the cytoplasm. The protein localises to the cytoskeleton. The protein resides in the cilium basal body. Its function is as follows. Probable planar cell polarity effector involved in cilium biogenesis. May regulate protein and membrane transport to the cilium. Proposed to function as core component of the CPLANE (ciliogenesis and planar polarity effectors) complex involved in the recruitment of peripheral IFT-A proteins to basal bodies. May regulate the morphogenesis of hair follicles which depends on functional primary cilia. Binds phosphatidylinositol 3-phosphate with highest affinity, followed by phosphatidylinositol 4-phosphate and phosphatidylinositol 5-phosphate. This chain is Protein fuzzy homolog (Fuz), found in Mus musculus (Mouse).